The chain runs to 358 residues: MSVKLNLSSSILLILFAAAASKEIGFDESNPIKMVSDNLHELEDTVVQILGQSRHVLSFSRFTHRYGKKYQSVEEMKLRFSVFKENLDLIRSTNKKGLSYKLSLNQFADLTWQEFQRYKLGAAQNCSATLKGSHKITEATVPDTKDWREDGIVSPVKEQGHCGSCWTFSTTGALEAAYHQAFGKGISLSEQQLVDCAGTFNNFGCHGGLPSQAFEYIKYNGGLDTEEAYPYTGKDGGCKFSAKNIGVQVRDSVNITLGAEDELKHAVGLVRPVSVAFEVVHEFRFYKKGVFTSNTCGNTPMDVNHAVLAVGYGVEDDVPYWLIKNSWGGEWGDNGYFKMEMGKNMCGVATCSSYPVVA.

Residues 1-21 (MSVKLNLSSSILLILFAAAAS) form the signal peptide. Residues 22-140 (KEIGFDESNP…KGSHKITEAT (119 aa)) constitute a propeptide, activation peptide. The N-linked (GlcNAc...) asparagine glycan is linked to Asn-125. 2 disulfide bridges follow: Cys-162–Cys-205 and Cys-196–Cys-238. Cys-165 is an active-site residue. N-linked (GlcNAc...) asparagine glycosylation is present at Asn-254. Cysteines 296 and 346 form a disulfide. Catalysis depends on residues His-305 and Asn-325.

The protein belongs to the peptidase C1 family.

The protein localises to the vacuole. The catalysed reaction is Hydrolysis of proteins, acting as an aminopeptidase (notably, cleaving Arg-|-Xaa bonds) as well as an endopeptidase.. Its function is as follows. May play a role in proteolysis leading to mobilization of nitrogen during senescence and starvation. The polypeptide is Thiol protease aleurain-like (Arabidopsis thaliana (Mouse-ear cress)).